We begin with the raw amino-acid sequence, 68 residues long: DNA-directed RNA polymerase subunit omega (68 aa).

This sequence belongs to the RNA polymerase subunit omega family. The RNAP catalytic core consists of 2 alpha, 1 beta, 1 beta' and 1 omega subunit. When a sigma factor is associated with the core the holoenzyme is formed, which can initiate transcription.

It carries out the reaction RNA(n) + a ribonucleoside 5'-triphosphate = RNA(n+1) + diphosphate. Its function is as follows. Promotes RNA polymerase assembly. Latches the N- and C-terminal regions of the beta' subunit thereby facilitating its interaction with the beta and alpha subunits. This chain is DNA-directed RNA polymerase subunit omega, found in Geobacter sp. (strain M21).